The sequence spans 271 residues: Ribosomal RNA small subunit methyltransferase A (271 aa).

Residues His11, Leu13, Gly38, Glu58, Asp86, and Asn101 each coordinate S-adenosyl-L-methionine.

It belongs to the class I-like SAM-binding methyltransferase superfamily. rRNA adenine N(6)-methyltransferase family. RsmA subfamily.

It is found in the cytoplasm. It carries out the reaction adenosine(1518)/adenosine(1519) in 16S rRNA + 4 S-adenosyl-L-methionine = N(6)-dimethyladenosine(1518)/N(6)-dimethyladenosine(1519) in 16S rRNA + 4 S-adenosyl-L-homocysteine + 4 H(+). Functionally, specifically dimethylates two adjacent adenosines (A1518 and A1519) in the loop of a conserved hairpin near the 3'-end of 16S rRNA in the 30S particle. May play a critical role in biogenesis of 30S subunits. The sequence is that of Ribosomal RNA small subunit methyltransferase A from Helicobacter pylori (strain J99 / ATCC 700824) (Campylobacter pylori J99).